Consider the following 491-residue polypeptide: Inositol-pentakisphosphate 2-kinase (491 aa).

Residues 136–140 (EIKPK) carry the EXKPK motif motif. Ser-282 is modified (phosphoserine).

This sequence belongs to the IPK1 type 2 family. As to expression, ubiquitously expressed, with high expression in heart, brain, testis and placenta.

Its subcellular location is the cytoplasm. The protein resides in the nucleus. The catalysed reaction is 1D-myo-inositol 1,3,4,5,6-pentakisphosphate + ATP = 1D-myo-inositol hexakisphosphate + ADP + H(+). Functionally, phosphorylates Ins(1,3,4,5,6)P5 at position 2 to form Ins(1,2,3,4,5,6)P6 (InsP6 or phytate). InsP6 is involved in many processes such as mRNA export, non-homologous end-joining, endocytosis, ion channel regulation. It also protects cells from TNF-alpha-induced apoptosis. This is Inositol-pentakisphosphate 2-kinase (IPPK) from Homo sapiens (Human).